The chain runs to 266 residues: ATP synthase subunit a (266 aa).

The next 5 helical transmembrane spans lie at 28 to 48 (SINV…LVIF), 88 to 108 (LIAP…LMDL), 141 to 161 (DVNI…FYSI), 206 to 226 (LFGN…LLPW), and 237 to 257 (AIFH…LTVV).

Belongs to the ATPase A chain family. F-type ATPases have 2 components, CF(1) - the catalytic core - and CF(0) - the membrane proton channel. CF(1) has five subunits: alpha(3), beta(3), gamma(1), delta(1), epsilon(1). CF(0) has three main subunits: a(1), b(2) and c(9-12). The alpha and beta chains form an alternating ring which encloses part of the gamma chain. CF(1) is attached to CF(0) by a central stalk formed by the gamma and epsilon chains, while a peripheral stalk is formed by the delta and b chains.

The protein localises to the cell inner membrane. Key component of the proton channel; it plays a direct role in the translocation of protons across the membrane. The sequence is that of ATP synthase subunit a from Pectobacterium carotovorum subsp. carotovorum (strain PC1).